The chain runs to 383 residues: 3-phytase (383 aa).

An N-terminal signal peptide occupies residues 1–26; it reads MNHSKTLLLTAAAGLMLTCGAVSSQA. Residues 27–30 constitute a propeptide that is removed on maturation; that stretch reads KHKL. The 332-residue stretch at 31–362 folds into the BPP domain; the sequence is SDPYHFTVNA…VPWERIADKI (332 aa). Positions 364 to 383 are disordered; the sequence is FHPQVNKQVDPRKMTDRSGK. Positions 372-383 are enriched in basic and acidic residues; sequence VDPRKMTDRSGK.

The protein localises to the secreted. The enzyme catalyses 1D-myo-inositol hexakisphosphate + H2O = 1D-myo-inositol 1,2,4,5,6-pentakisphosphate + phosphate. The chain is 3-phytase (phy) from Bacillus sp. (strain DS11).